We begin with the raw amino-acid sequence, 461 residues long: Type IV secretion system protein PtlD homolog (461 aa).

Residues 1-24 (MAGLSRILLSCTLACLLAGQAAQA) form the signal peptide. The next 5 helical transmembrane spans lie at 118-138 (LQPL…YALL), 232-252 (WLLC…LAAS), 253-273 (LLIV…LFLV), 294-314 (ALVF…VLAG), and 333-353 (MLAA…VPLA). Residues 376–411 (AHRQAAARQYAPRPAAAAAAAGPHQAGTYAASATPA) are compositionally biased toward low complexity. Positions 376–461 (AHRQAAARQY…RVLPRKPNLP (86 aa)) are disordered. Residues 439–453 (VRRDDRPAPAPDRRV) are compositionally biased toward basic and acidic residues.

Its subcellular location is the cell membrane. In Bordetella bronchiseptica (strain ATCC BAA-588 / NCTC 13252 / RB50) (Alcaligenes bronchisepticus), this protein is Type IV secretion system protein PtlD homolog (ptlD).